Here is a 568-residue protein sequence, read N- to C-terminus: Chaperonin homolog Hsp-60, mitochondrial (568 aa).

Belongs to the chaperonin (HSP60) family.

Its subcellular location is the mitochondrion matrix. Its function is as follows. Implicated in mitochondrial protein import and macromolecular assembly. May facilitate the correct folding of imported proteins. May also prevent misfolding and promote the refolding and proper assembly of unfolded polypeptides generated under stress conditions in the mitochondrial matrix. The polypeptide is Chaperonin homolog Hsp-60, mitochondrial (hsp-60) (Caenorhabditis elegans).